The chain runs to 382 residues: UDP-4-amino-4-deoxy-L-arabinose--oxoglutarate aminotransferase (382 aa).

An N6-(pyridoxal phosphate)lysine modification is found at K183.

This sequence belongs to the DegT/DnrJ/EryC1 family. ArnB subfamily. Homodimer. Pyridoxal 5'-phosphate is required as a cofactor.

It catalyses the reaction UDP-4-amino-4-deoxy-beta-L-arabinose + 2-oxoglutarate = UDP-beta-L-threo-pentopyranos-4-ulose + L-glutamate. It participates in nucleotide-sugar biosynthesis; UDP-4-deoxy-4-formamido-beta-L-arabinose biosynthesis; UDP-4-deoxy-4-formamido-beta-L-arabinose from UDP-alpha-D-glucuronate: step 2/3. The protein operates within bacterial outer membrane biogenesis; lipopolysaccharide biosynthesis. In terms of biological role, catalyzes the conversion of UDP-4-keto-arabinose (UDP-Ara4O) to UDP-4-amino-4-deoxy-L-arabinose (UDP-L-Ara4N). The modified arabinose is attached to lipid A and is required for resistance to polymyxin and cationic antimicrobial peptides. The protein is UDP-4-amino-4-deoxy-L-arabinose--oxoglutarate aminotransferase of Pseudomonas aeruginosa (strain LESB58).